The chain runs to 1113 residues: Period circadian protein homolog 3 (1113 aa).

Positions 1–48 (MDPCGDPAVPGGDCPQTRGPGLQGASGQEGPLQGTCVDSSHSEHEDRN) are disordered. Positions 54–63 (LIMVVQEMKK) match the Nuclear export signal 1 motif. PAS domains lie at 120-187 (LASE…PTQL) and 258-324 (YEAP…KVLK). The PAC domain maps to 333–376 (HSPVRFCTQNGEYVILDSSWSSFVNPWSRKVSFIIGRHKVRTSP). Residues 399-408 (LQEQIHKLLL) carry the Nuclear export signal 3 motif. Residues 418–427 (GYGSLGSSGS) show a composition bias toward low complexity. 5 disordered regions span residues 418–451 (GYGS…GQHE), 485–530 (VAET…SSSY), 561–580 (TSSS…SQRD), 718–742 (HSRC…DTSS), and 871–906 (LVPA…PFIS). Polar residues-rich tracts occupy residues 428–441 (QEQH…SESS) and 501–530 (FSSS…SSSY). Positions 551–750 (LKRKCISCTN…SSPGAHLCPH (200 aa)) are CSNK1E binding domain. Residues 566–580 (EEAKPIPEVDSSQRD) show a composition bias toward basic and acidic residues. The Nuclear localization signal motif lies at 719–735 (SRCAGSERQKHKRKKLP). Residues 889–901 (RRVEENWEAHSEE) are compositionally biased toward basic and acidic residues. S907 is subject to Phosphoserine. Positions 913–920 (LQLNLLQE) match the Nuclear export signal 2 motif. The tract at residues 921–1010 (EMPAPSESAD…DRQRDEALPG (90 aa)) is disordered. The span at 962-986 (ATATAQQESAAASGSSASSIYFSST) shows a compositional bias: low complexity. A compositionally biased stretch (basic and acidic residues) spans 993-1007 (SENRQRPQDRQRDEA). The tract at residues 1035-1113 (ERGREEVLKQ…LEQHPAEDTS (79 aa)) is CRY binding domain.

As to quaternary structure, homodimer. Component of the circadian core oscillator, which includes the CRY proteins, CLOCK or NPAS2, BMAL1 or BMAL2, CSNK1D and/or CSNK1E, TIMELESS and the PER proteins. Interacts directly with PER1, PER2, CRY1, CRY2, and TIMELESS; interaction with CRY1 and CRY2 is weak and not rhythmic. Interacts with FBXW11 and BTRC. In terms of processing, phosphorylation by CSNK1E is weak and appears to require association with PER1 and translocation to the nucleus. Post-translationally, ubiquitinated. Widely expressed. Expressed in heart, brain, lung, liver, skeletal muscle, testis, and at low level in the spleen and kidney. In brain, mainly found in the SCN, hippocampus, piriform cortex, and cerebellum. Lower level of expression in the neocortex. Expression exhibits synchronous oscillations in liver, skeletal muscle and testis.

It localises to the cytoplasm. The protein resides in the nucleus. Its function is as follows. Originally described as a core component of the circadian clock. The circadian clock, an internal time-keeping system, regulates various physiological processes through the generation of approximately 24 hour circadian rhythms in gene expression, which are translated into rhythms in metabolism and behavior. It is derived from the Latin roots 'circa' (about) and 'diem' (day) and acts as an important regulator of a wide array of physiological functions including metabolism, sleep, body temperature, blood pressure, endocrine, immune, cardiovascular, and renal function. Consists of two major components: the central clock, residing in the suprachiasmatic nucleus (SCN) of the brain, and the peripheral clocks that are present in nearly every tissue and organ system. Both the central and peripheral clocks can be reset by environmental cues, also known as Zeitgebers (German for 'timegivers'). The predominant Zeitgeber for the central clock is light, which is sensed by retina and signals directly to the SCN. The central clock entrains the peripheral clocks through neuronal and hormonal signals, body temperature and feeding-related cues, aligning all clocks with the external light/dark cycle. Circadian rhythms allow an organism to achieve temporal homeostasis with its environment at the molecular level by regulating gene expression to create a peak of protein expression once every 24 hours to control when a particular physiological process is most active with respect to the solar day. Transcription and translation of core clock components (CLOCK, NPAS2, BMAL1, BMAL2, PER1, PER2, PER3, CRY1 and CRY2) plays a critical role in rhythm generation, whereas delays imposed by post-translational modifications (PTMs) are important for determining the period (tau) of the rhythms (tau refers to the period of a rhythm and is the length, in time, of one complete cycle). A diurnal rhythm is synchronized with the day/night cycle, while the ultradian and infradian rhythms have a period shorter and longer than 24 hours, respectively. Disruptions in the circadian rhythms contribute to the pathology of cardiovascular diseases, cancer, metabolic syndromes and aging. A transcription/translation feedback loop (TTFL) forms the core of the molecular circadian clock mechanism. Transcription factors, CLOCK or NPAS2 and BMAL1 or BMAL2, form the positive limb of the feedback loop, act in the form of a heterodimer and activate the transcription of core clock genes and clock-controlled genes (involved in key metabolic processes), harboring E-box elements (5'-CACGTG-3') within their promoters. The core clock genes: PER1/2/3 and CRY1/2 which are transcriptional repressors form the negative limb of the feedback loop and interact with the CLOCK|NPAS2-BMAL1|BMAL2 heterodimer inhibiting its activity and thereby negatively regulating their own expression. This heterodimer also activates nuclear receptors NR1D1, NR1D2, RORA, RORB and RORG, which form a second feedback loop and which activate and repress BMAL1 transcription, respectively. Has a redundant role with the other PER proteins PER1 and PER2 and is not essential for the circadian rhythms maintenance. In contrast, plays an important role in sleep-wake timing and sleep homeostasis probably through the transcriptional regulation of sleep homeostasis-related genes, without influencing circadian parameters. Can bind heme. This Mus musculus (Mouse) protein is Period circadian protein homolog 3 (Per3).